A 219-amino-acid polypeptide reads, in one-letter code: MMNSRISIIIALSCIMITSIRAYDPDALQDLCVADKSHGTKLNGFPCKETLNITESDFFFAGISKPAVINSTMGSAVTGANVEKIPGLNTLSVSLARIDYAPGGLNPPHTHPRATEVVYVLEGELEVGFITTANKLFTKTIKIGEVFVFPRGLVHFQKNNGKSPASVLSAFNSQLPGTASVAATLFAAEPALPEDVLTKTFQVGSKMVDKIKERLATKK.

Positions 1 to 22 (MMNSRISIIIALSCIMITSIRA) are cleaved as a signal peptide. An intrachain disulfide couples Cys32 to Cys47. Residues Asn52 and Asn70 are each glycosylated (N-linked (GlcNAc...) asparagine). In terms of domain architecture, Cupin type-1 spans 59–209 (FFAGISKPAV…TFQVGSKMVD (151 aa)). The Mn(2+) site is built by His109, His111, Glu116, and His155.

Belongs to the germin family. Oligomer (believed to be a pentamer but probably hexamer).

The protein resides in the secreted. The protein localises to the extracellular space. Its subcellular location is the apoplast. Its function is as follows. May play a role in plant defense. Probably has no oxalate oxidase activity even if the active site is conserved. The protein is Germin-like protein subfamily 2 member 2 of Arabidopsis thaliana (Mouse-ear cress).